We begin with the raw amino-acid sequence, 347 residues long: Ribosomal RNA large subunit methyltransferase M (347 aa).

Residues S184, 217 to 220 (APGG), D236, D256, and D272 each bind S-adenosyl-L-methionine. K301 (proton acceptor) is an active-site residue.

Belongs to the class I-like SAM-binding methyltransferase superfamily. RNA methyltransferase RlmE family. RlmM subfamily. In terms of assembly, monomer.

The protein resides in the cytoplasm. It catalyses the reaction cytidine(2498) in 23S rRNA + S-adenosyl-L-methionine = 2'-O-methylcytidine(2498) in 23S rRNA + S-adenosyl-L-homocysteine + H(+). Its function is as follows. Catalyzes the 2'-O-methylation at nucleotide C2498 in 23S rRNA. This Xanthomonas oryzae pv. oryzae (strain PXO99A) protein is Ribosomal RNA large subunit methyltransferase M.